A 467-amino-acid chain; its full sequence is Cysteine--tRNA ligase (467 aa).

Zn(2+) is bound at residue cysteine 30. Positions proline 32–asparagine 42 match the 'HIGH' region motif. Residues cysteine 210, histidine 235, and glutamate 239 each coordinate Zn(2+). Positions lysine 267–serine 271 match the 'KMSKS' region motif. Lysine 270 serves as a coordination point for ATP. Serine 271 is modified (phosphoserine).

It belongs to the class-I aminoacyl-tRNA synthetase family. In terms of assembly, monomer. Zn(2+) serves as cofactor.

The protein localises to the cytoplasm. The enzyme catalyses tRNA(Cys) + L-cysteine + ATP = L-cysteinyl-tRNA(Cys) + AMP + diphosphate. The sequence is that of Cysteine--tRNA ligase from Geobacillus thermodenitrificans (strain NG80-2).